Consider the following 515-residue polypeptide: Fatty acyl-CoA reductase 1 (515 aa).

Over 1–465 the chain is Cytoplasmic; the sequence is MVSIPEYYEG…ARKHLNKLRN (465 aa). The segment at 451–507 is necessary and sufficient for PEX19-mediated localization into peroxisome membrane; it reads SGLPAARKHLNKLRNIRYGFNTILVILIWRIFIARSQMARNIWYFVVSLCYKFLSYF. The helical transmembrane segment at 466–483 threads the bilayer; it reads IRYGFNTILVILIWRIFI. Residues 484–515 lie on the Peroxisomal side of the membrane; the sequence is ARSQMARNIWYFVVSLCYKFLSYFRASSTMRY.

This sequence belongs to the fatty acyl-CoA reductase family. In terms of assembly, interacts with PEX19; PEX19 mediates the targeting of FAR1 to peroxisomes.

The protein resides in the peroxisome membrane. The enzyme catalyses a long-chain fatty acyl-CoA + 2 NADPH + 2 H(+) = a long-chain primary fatty alcohol + 2 NADP(+) + CoA. It catalyses the reaction hexadecanoyl-CoA + 2 NADPH + 2 H(+) = hexadecan-1-ol + 2 NADP(+) + CoA. It carries out the reaction octadecanoyl-CoA + 2 NADPH + 2 H(+) = octadecan-1-ol + 2 NADP(+) + CoA. The catalysed reaction is eicosanoyl-CoA + 2 NADPH + 2 H(+) = eicosan-1-ol + 2 NADP(+) + CoA. The enzyme catalyses (9Z)-octadecenoyl-CoA + 2 NADPH + 2 H(+) = (9Z)-octadecen-1-ol + 2 NADP(+) + CoA. It catalyses the reaction (9Z,12Z)-octadecadienoyl-CoA + 2 NADPH + 2 H(+) = (9Z,12Z)-octadecadien-1-ol + 2 NADP(+) + CoA. It carries out the reaction 16-methylheptadecanoyl-CoA + 2 NADPH + 2 H(+) = 16-methylheptadecan-1-ol + 2 NADP(+) + CoA. The catalysed reaction is 18-methylnonadecanoyl-CoA + 2 NADPH + 2 H(+) = 18-methylnonadecan-1-ol + 2 NADP(+) + CoA. Functionally, catalyzes the reduction of saturated and unsaturated C16 or C18 fatty acyl-CoA to fatty alcohols. It plays an essential role in the production of ether lipids/plasmalogens which synthesis requires fatty alcohols. In parallel, it is also required for wax monoesters production since fatty alcohols also constitute a substrate for their synthesis. The polypeptide is Fatty acyl-CoA reductase 1 (Homo sapiens (Human)).